A 1216-amino-acid polypeptide reads, in one-letter code: DNA-directed RNA polymerase subunit beta (1216 aa).

Positions 1185 to 1216 (EEKQELPSQEYESLNLDQELKTASENVSESEF) are disordered. Residues 1190-1216 (LPSQEYESLNLDQELKTASENVSESEF) show a composition bias toward polar residues.

The protein belongs to the RNA polymerase beta chain family. As to quaternary structure, the RNAP catalytic core consists of 2 alpha, 1 beta, 1 beta' and 1 omega subunit. When a sigma factor is associated with the core the holoenzyme is formed, which can initiate transcription.

The enzyme catalyses RNA(n) + a ribonucleoside 5'-triphosphate = RNA(n+1) + diphosphate. Functionally, DNA-dependent RNA polymerase catalyzes the transcription of DNA into RNA using the four ribonucleoside triphosphates as substrates. In Mycoplasmopsis pulmonis (strain UAB CTIP) (Mycoplasma pulmonis), this protein is DNA-directed RNA polymerase subunit beta.